The chain runs to 341 residues: Methionine import ATP-binding protein MetN 2 (341 aa).

The 240-residue stretch at I2–V241 folds into the ABC transporter domain. G38–S45 provides a ligand contact to ATP.

It belongs to the ABC transporter superfamily. Methionine importer (TC 3.A.1.24) family. In terms of assembly, the complex is composed of two ATP-binding proteins (MetN), two transmembrane proteins (MetI) and a solute-binding protein (MetQ).

It is found in the cell membrane. The enzyme catalyses L-methionine(out) + ATP + H2O = L-methionine(in) + ADP + phosphate + H(+). The catalysed reaction is D-methionine(out) + ATP + H2O = D-methionine(in) + ADP + phosphate + H(+). In terms of biological role, part of the ABC transporter complex MetNIQ involved in methionine import. Responsible for energy coupling to the transport system. This is Methionine import ATP-binding protein MetN 2 from Staphylococcus aureus (strain N315).